A 155-amino-acid polypeptide reads, in one-letter code: Endoribonuclease YbeY (155 aa).

The Zn(2+) site is built by His115, His119, and His125.

The protein belongs to the endoribonuclease YbeY family. Zn(2+) serves as cofactor.

Its subcellular location is the cytoplasm. In terms of biological role, single strand-specific metallo-endoribonuclease involved in late-stage 70S ribosome quality control and in maturation of the 3' terminus of the 16S rRNA. In Polynucleobacter asymbioticus (strain DSM 18221 / CIP 109841 / QLW-P1DMWA-1) (Polynucleobacter necessarius subsp. asymbioticus), this protein is Endoribonuclease YbeY.